A 564-amino-acid chain; its full sequence is CTP synthase (564 aa).

The interval 1-272 (MARPKNVKHI…DIRVLKKLGL (272 aa)) is amidoligase domain. A CTP-binding site is contributed by Ser-18. Ser-18 serves as a coordination point for UTP. ATP is bound at residue 19-24 (SLGKGI). L-glutamine is bound at residue Tyr-59. An ATP-binding site is contributed by Asp-76. Mg(2+) is bound by residues Asp-76 and Glu-146. Residues 153–155 (DIE), 193–198 (KTKPTQ), and Lys-229 contribute to the CTP site. UTP-binding positions include 193–198 (KTKPTQ) and Lys-229. In terms of domain architecture, Glutamine amidotransferase type-1 spans 299–543 (TIAICGKYTE…VAAAKEFAHG (245 aa)). Gly-363 contributes to the L-glutamine binding site. Cys-390 acts as the Nucleophile; for glutamine hydrolysis in catalysis. L-glutamine contacts are provided by residues 391-394 (LGMQ), Glu-414, and Arg-471. Catalysis depends on residues His-516 and Glu-518.

The protein belongs to the CTP synthase family. As to quaternary structure, homotetramer.

It carries out the reaction UTP + L-glutamine + ATP + H2O = CTP + L-glutamate + ADP + phosphate + 2 H(+). The catalysed reaction is L-glutamine + H2O = L-glutamate + NH4(+). It catalyses the reaction UTP + NH4(+) + ATP = CTP + ADP + phosphate + 2 H(+). It functions in the pathway pyrimidine metabolism; CTP biosynthesis via de novo pathway; CTP from UDP: step 2/2. Allosterically activated by GTP, when glutamine is the substrate; GTP has no effect on the reaction when ammonia is the substrate. The allosteric effector GTP functions by stabilizing the protein conformation that binds the tetrahedral intermediate(s) formed during glutamine hydrolysis. Inhibited by the product CTP, via allosteric rather than competitive inhibition. Catalyzes the ATP-dependent amination of UTP to CTP with either L-glutamine or ammonia as the source of nitrogen. Regulates intracellular CTP levels through interactions with the four ribonucleotide triphosphates. This chain is CTP synthase, found in Prosthecochloris aestuarii (strain DSM 271 / SK 413).